Consider the following 256-residue polypeptide: 2-aminoethanethiol dioxygenase (256 aa).

Residues H100, H102, and H179 each coordinate Fe cation.

In terms of assembly, monomer. Requires Fe cation as cofactor. In terms of tissue distribution, ubiquitous, with highest expression in brain, heart and skeletal muscle (at protein level).

It catalyses the reaction cysteamine + O2 = hypotaurine + H(+). It carries out the reaction N-terminal L-cysteinyl-[protein] + O2 = N-terminal S-hydroxy-S-oxy-L-cysteinyl-[protein] + H(+). Its function is as follows. Plays a vital role in regulating thiol metabolism and preserving oxygen homeostasis by oxidizing the sulfur of cysteamine and N-terminal cysteine-containing proteins to their corresponding sulfinic acids using O2 as a cosubstrate. Catalyzes the oxidation of cysteamine (2-aminoethanethiol) to hypotaurine. Catalyzes the oxidation of the regulator of G-protein signaling 5 (RGS5). Also oxidizes proteins RGS4 and interleukin-32 (IL32). The sequence is that of 2-aminoethanethiol dioxygenase (Ado) from Mus musculus (Mouse).